Reading from the N-terminus, the 275-residue chain is Large ribosomal subunit protein uL2c (275 aa).

The disordered stretch occupies residues 219–255; sequence TVRGSVMNPCDHPHGGGEGRAPIGRTRPLTPWGKPAL.

It belongs to the universal ribosomal protein uL2 family. In terms of assembly, part of the 50S ribosomal subunit.

It is found in the plastid. The protein resides in the chloroplast. The protein is Large ribosomal subunit protein uL2c (rpl2) of Trieres chinensis (Marine centric diatom).